We begin with the raw amino-acid sequence, 381 residues long: MYINYLKDLIGFKSVTPKSDGAIEYIDDLLKQHGFKTEIKIFGDSKSEQVTNLYAVFGSNEPNICFVGHVDVVLAGNHELWHNASPFKASQQDDKIYGRGAVDMKGAIACFLAASLDFIKNNTDFKGSISFLLTSDEEGKAKHGTKEMLQYIYDQGYKINFAIVGEPTCEKEIGDAIKIGRRGSVNFKLNIEGLSGHVAYPHKANNPLPCLIIILNELTNIKLDEGIEFFQRSNLEVTNIEVSNNTSNVIPASTEASFNIRFNNLHSAETLAKQVEEIIKQHCKEYKVDYKLEYSSSAESFIQNPSDKIKEFAKVVEHTLKIKPEFSTSGGTSDARFVKNYCPLVEFGLLSETAHKINEYTKISDLQKLYDVYYNFLMEIL.

Position 69 (H69) interacts with Zn(2+). Residue D71 is part of the active site. D103 lines the Zn(2+) pocket. The active-site Proton acceptor is E137. E138, E166, and H355 together coordinate Zn(2+).

It belongs to the peptidase M20A family. DapE subfamily. As to quaternary structure, homodimer. Zn(2+) serves as cofactor. Co(2+) is required as a cofactor.

The enzyme catalyses N-succinyl-(2S,6S)-2,6-diaminopimelate + H2O = (2S,6S)-2,6-diaminopimelate + succinate. It participates in amino-acid biosynthesis; L-lysine biosynthesis via DAP pathway; LL-2,6-diaminopimelate from (S)-tetrahydrodipicolinate (succinylase route): step 3/3. Its function is as follows. Catalyzes the hydrolysis of N-succinyl-L,L-diaminopimelic acid (SDAP), forming succinate and LL-2,6-diaminopimelate (DAP), an intermediate involved in the bacterial biosynthesis of lysine and meso-diaminopimelic acid, an essential component of bacterial cell walls. In Rickettsia massiliae (strain Mtu5), this protein is Succinyl-diaminopimelate desuccinylase.